The following is a 520-amino-acid chain: Cytochrome P450 4F8 (520 aa).

The chain crosses the membrane as a helical span at residues 15–37 (AASPWLLLLVVGASWLLARILAW). Cys468 contributes to the heme binding site.

It belongs to the cytochrome P450 family. Heme serves as cofactor. In terms of tissue distribution, expressed in the epithelium of seminal vesicles, in renal cortex, in adult and fetal liver, in epidermis, in corneal epithelium, in sweat glands, hair follicles, epithelial linings of the ampulla of vas deferens and of the stomach and small intestine, as well as in the transitional epithelium of the bladder and ureter (at protein level). In the epidermis, expressed from the basal cell to the granular cell layers. In the corneal epithelium, expressed in all cell layers. Also detected in prostate. Up-regulated in the epidermis of psoriatic lesions.

Its subcellular location is the endoplasmic reticulum membrane. The protein localises to the microsome membrane. It carries out the reaction an organic molecule + reduced [NADPH--hemoprotein reductase] + O2 = an alcohol + oxidized [NADPH--hemoprotein reductase] + H2O + H(+). It catalyses the reaction (5Z,8Z,11Z,14Z)-eicosatetraenoate + reduced [NADPH--hemoprotein reductase] + O2 = (18R)-hydroxy-(5Z,8Z,11Z,14Z)-eicosatetraenoate + oxidized [NADPH--hemoprotein reductase] + H2O + H(+). The enzyme catalyses (4Z,7Z,10Z,13Z,16Z)-docosapentaenoate + reduced [NADPH--hemoprotein reductase] + O2 = 20-hydroxy-(4Z,7Z,10Z,13Z,16Z)-docosapentaenoate + oxidized [NADPH--hemoprotein reductase] + H2O + H(+). The catalysed reaction is prostaglandin H1 + reduced [NADPH--hemoprotein reductase] + O2 = 19-hydroxyprostaglandin H1 + oxidized [NADPH--hemoprotein reductase] + H2O + H(+). It carries out the reaction prostaglandin H2 + reduced [NADPH--hemoprotein reductase] + O2 = 19-hydroxyprostaglandin H2 + oxidized [NADPH--hemoprotein reductase] + H2O + H(+). It catalyses the reaction prostaglandin I2 + reduced [NADPH--hemoprotein reductase] + O2 = 19-hydroxy-prostaglandin I2 + oxidized [NADPH--hemoprotein reductase] + H2O + H(+). The enzyme catalyses (4Z,7Z,10Z,13Z,16Z,19Z)-docosahexaenoate + reduced [NADPH--hemoprotein reductase] + O2 = 10,11-epoxy-(4Z,7Z,13Z,16Z,19Z)-docosapentaenoate + oxidized [NADPH--hemoprotein reductase] + H2O + H(+). The catalysed reaction is (4Z,7Z,10Z,13Z,16Z,19Z)-docosahexaenoate + reduced [NADPH--hemoprotein reductase] + O2 = 13,14-epoxy-(4Z,7Z,10Z,16Z,19Z)-docosapentaenoate + oxidized [NADPH--hemoprotein reductase] + H2O + H(+). It carries out the reaction (4Z,7Z,10Z,13Z,16Z,19Z)-docosahexaenoate + reduced [NADPH--hemoprotein reductase] + O2 = 16,17-epoxy-(4Z,7Z,10Z,13Z,19Z)-docosapentaenoate + oxidized [NADPH--hemoprotein reductase] + H2O + H(+). It catalyses the reaction (4Z,7Z,10Z,13Z,16Z,19Z)-docosahexaenoate + reduced [NADPH--hemoprotein reductase] + O2 = 19,20-epoxy-(4Z,7Z,10Z,13Z,16Z)-docosapentaenoate + oxidized [NADPH--hemoprotein reductase] + H2O + H(+). The enzyme catalyses (7Z,10Z,13Z,16Z,19Z)-docosapentaenoate + reduced [NADPH--hemoprotein reductase] + O2 = 10,11-epoxy-(7Z,13Z,16Z,19Z)-docosatetraenoate + oxidized [NADPH--hemoprotein reductase] + H2O + H(+). The catalysed reaction is (7Z,10Z,13Z,16Z,19Z)-docosapentaenoate + reduced [NADPH--hemoprotein reductase] + O2 = 13,14-epoxy-(7Z,10Z,16Z,19Z)-docosatetraenoate + oxidized [NADPH--hemoprotein reductase] + H2O + H(+). It carries out the reaction (7Z,10Z,13Z,16Z,19Z)-docosapentaenoate + reduced [NADPH--hemoprotein reductase] + O2 = 16,17-epoxy-(7Z,10Z,13Z,19Z)-docosatetraenoate + oxidized [NADPH--hemoprotein reductase] + H2O + H(+). It catalyses the reaction (7Z,10Z,13Z,16Z,19Z)-docosapentaenoate + reduced [NADPH--hemoprotein reductase] + O2 = 19,20-epoxy-(7Z,10Z,13Z,16Z)-docosatetraenoate + oxidized [NADPH--hemoprotein reductase] + H2O + H(+). The protein operates within lipid metabolism; fatty acid metabolism. Its function is as follows. A cytochrome P450 monooxygenase involved in the metabolism of endogenous polyunsaturated fatty acids (PUFAs) and their oxygenated derivatives (oxylipins). Mechanistically, uses molecular oxygen inserting one oxygen atom into a substrate, and reducing the second into a water molecule, with two electrons provided by NADPH via cytochrome P450 reductase (CPR; NADPH-ferrihemoprotein reductase). Catalyzes the hydroxylation of carbon hydrogen bonds, with preference for omega-1 and omega-2 positions. Hydroxylates (5Z,8Z,11Z,14Z)-eicosatetraenoic acid (arachidonate) predominantly at omega-2 position to form (18R)-hydroxyeicosatetraenoic acid (18R-HETE). Exhibits omega-1 hydroxylase activity toward prostaglandin (PG) H1, PGH2 and PGI2. Catalyzes the epoxidation of double bonds of PUFAs, including docosahexaenoic and docosapentaenoic acids. Shows little activity against PGD2, PGE1, PGE2, PGF2alpha, and leukotriene B4. This Homo sapiens (Human) protein is Cytochrome P450 4F8.